A 290-amino-acid polypeptide reads, in one-letter code: Fat storage-inducing transmembrane protein 1 (290 aa).

5 consecutive transmembrane segments (helical) span residues 1 to 21, 26 to 46, 65 to 85, 173 to 193, and 205 to 225; these read MFLN…LGNT, HFHL…LWVS, SGWG…SFSV, LLLC…GPYL, and ILFL…LCLL.

This sequence belongs to the FIT family. FIT1 subfamily.

It localises to the endoplasmic reticulum membrane. Its function is as follows. May play an important role in the formation of lipid droplets (LDs) which are storage organelles at the center of lipid and energy homeostasis. May directly bind to diacylglycerol (DAGs) and triacylglycerol. This Danio rerio (Zebrafish) protein is Fat storage-inducing transmembrane protein 1 (fitm1l).